The primary structure comprises 179 residues: Ribosome-recycling factor (179 aa).

This sequence belongs to the RRF family.

The protein resides in the cytoplasm. Its function is as follows. Responsible for the release of ribosomes from messenger RNA at the termination of protein biosynthesis. May increase the efficiency of translation by recycling ribosomes from one round of translation to another. The polypeptide is Ribosome-recycling factor (Chlamydia trachomatis serovar A (strain ATCC VR-571B / DSM 19440 / HAR-13)).